A 480-amino-acid chain; its full sequence is Gasdermin-C4 (480 aa).

Positions 1-226 are triggers pyroptosis; the sequence is MGYSFDRASK…TCVILPSATK (226 aa).

The protein belongs to the gasdermin family. Homooligomer; homooligomeric ring-shaped pore complex containing 27-28 subunits when inserted in the membrane. Post-translationally, cleavage by CASP8 relieves autoinhibition by releasing the N-terminal moiety (Gasdermin-C4, N-terminal) that initiates pyroptosis. In terms of processing, palmitoylated.

Its subcellular location is the cytoplasm. The protein localises to the cytosol. The protein resides in the cell membrane. Its activity is regulated as follows. The full-length protein before cleavage is inactive: intramolecular interactions between N- and C-terminal domains mediate autoinhibition in the absence of activation signal. The intrinsic pyroptosis-inducing activity is carried by the released N-terminal moiety (Gasdermin-C4, N-terminal) following cleavage by caspase CASP8. Its function is as follows. This form constitutes the precursor of the pore-forming protein: upon cleavage, the released N-terminal moiety (Gasdermin-C4, N-terminal) binds to membranes and forms pores, triggering pyroptosis. Functionally, pore-forming protein that causes membrane permeabilization and pyroptosis. Produced by the cleavage of gasdermin-C4 by caspase CASP8 in response to death signals. After cleavage, moves to the plasma membrane where it strongly binds to membrane inner leaflet lipids. Homooligomerizes within the membrane and forms pores of 10-15 nanometers (nm) of inner diameter, triggering pyroptosis. The polypeptide is Gasdermin-C4 (Mus musculus (Mouse)).